We begin with the raw amino-acid sequence, 572 residues long: Phosphoenolpyruvate-protein phosphotransferase (572 aa).

The active-site Tele-phosphohistidine intermediate is the H190. 2 residues coordinate phosphoenolpyruvate: R297 and R333. Mg(2+) is bound by residues E432 and D456. Phosphoenolpyruvate-binding positions include 455 to 456 and R466; that span reads ND. The active-site Proton donor is the C503.

The protein belongs to the PEP-utilizing enzyme family. Homodimer. The cofactor is Mg(2+).

The protein resides in the cytoplasm. The enzyme catalyses L-histidyl-[protein] + phosphoenolpyruvate = N(pros)-phospho-L-histidyl-[protein] + pyruvate. Functionally, general (non sugar-specific) component of the phosphoenolpyruvate-dependent sugar phosphotransferase system (sugar PTS). This major carbohydrate active-transport system catalyzes the phosphorylation of incoming sugar substrates concomitantly with their translocation across the cell membrane. Enzyme I transfers the phosphoryl group from phosphoenolpyruvate (PEP) to the phosphoryl carrier protein (HPr). The sequence is that of Phosphoenolpyruvate-protein phosphotransferase (ptsI) from Listeria innocua serovar 6a (strain ATCC BAA-680 / CLIP 11262).